The primary structure comprises 352 residues: Inhibin beta C chain (352 aa).

The N-terminal stretch at 1–18 is a signal peptide; the sequence is MASSLLLALLFLTPTTVV. The propeptide occupies 19 to 236; that stretch reads NPKTEGPCPA…VEGKHRVRRR (218 aa). Asn111, Asn143, Asn161, and Asn173 each carry an N-linked (GlcNAc...) asparagine glycan. 4 cysteine pairs are disulfide-bonded: Cys240–Cys248, Cys247–Cys317, Cys276–Cys349, and Cys280–Cys351.

This sequence belongs to the TGF-beta family. Homodimeric or heterodimeric through association with alpha and beta subunits, linked by one or more disulfide bonds. Inhibins are heterodimers of one alpha and one beta subunit. Activins are homo- or heterodimers of beta subunits only. In terms of tissue distribution, mainly expressed in the adult liver.

It is found in the secreted. Functionally, inhibins and activins inhibit and activate, respectively, the secretion of follitropin by the pituitary gland. Inhibins/activins are involved in regulating a number of diverse functions such as hypothalamic and pituitary hormone secretion, gonadal hormone secretion, germ cell development and maturation, erythroid differentiation, insulin secretion, nerve cell survival, embryonic axial development or bone growth, depending on their subunit composition. Inhibins appear to oppose the functions of activins. This Mus musculus (Mouse) protein is Inhibin beta C chain (Inhbc).